Reading from the N-terminus, the 342-residue chain is N-acetyl-gamma-glutamyl-phosphate reductase (342 aa).

C149 is a catalytic residue.

The protein belongs to the NAGSA dehydrogenase family. Type 1 subfamily.

The protein resides in the cytoplasm. It carries out the reaction N-acetyl-L-glutamate 5-semialdehyde + phosphate + NADP(+) = N-acetyl-L-glutamyl 5-phosphate + NADPH + H(+). It participates in amino-acid biosynthesis; L-arginine biosynthesis; N(2)-acetyl-L-ornithine from L-glutamate: step 3/4. Functionally, catalyzes the NADPH-dependent reduction of N-acetyl-5-glutamyl phosphate to yield N-acetyl-L-glutamate 5-semialdehyde. This Cereibacter sphaeroides (strain ATCC 17023 / DSM 158 / JCM 6121 / CCUG 31486 / LMG 2827 / NBRC 12203 / NCIMB 8253 / ATH 2.4.1.) (Rhodobacter sphaeroides) protein is N-acetyl-gamma-glutamyl-phosphate reductase.